A 332-amino-acid polypeptide reads, in one-letter code: L-lactate dehydrogenase A chain (332 aa).

NAD(+) contacts are provided by residues 29-57 and Arg99; that span reads GAVG…VEDK. Substrate-binding residues include Arg106, Asn138, and Arg169. Asn138 contributes to the NAD(+) binding site. His193 acts as the Proton acceptor in catalysis. Thr248 is a substrate binding site.

The protein belongs to the LDH/MDH superfamily. LDH family. Homotetramer.

The protein resides in the cytoplasm. It carries out the reaction (S)-lactate + NAD(+) = pyruvate + NADH + H(+). It participates in fermentation; pyruvate fermentation to lactate; (S)-lactate from pyruvate: step 1/1. Functionally, interconverts simultaneously and stereospecifically pyruvate and lactate with concomitant interconversion of NADH and NAD(+). The chain is L-lactate dehydrogenase A chain (LDHA) from Columba livia (Rock dove).